The primary structure comprises 26 residues: Delta-hemolysin (26 aa).

Methionine 1 is modified (N-formylmethionine).

The protein belongs to the delta-lysin family.

It is found in the secreted. It localises to the host cell membrane. In terms of biological role, lyses erythrocytes and many other mammalian cells. The sequence is that of Delta-hemolysin (hld) from Staphylococcus aureus (strain MSSA476).